Consider the following 228-residue polypeptide: Cutinase CUT1 (228 aa).

The N-terminal stretch at Met-1–Ala-16 is a signal peptide. A disulfide bond links Cys-49 and Cys-127. Ser-138 serves as the catalytic Nucleophile. A disulfide bridge links Cys-189 with Cys-196. N-linked (GlcNAc...) asparagine glycosylation is present at Asn-190. Asp-193 is an active-site residue. His-206 serves as the catalytic Proton donor/acceptor.

This sequence belongs to the cutinase family. In terms of processing, the 2 disulfide bonds play a critical role in holding the catalytic residues in juxta-position; reduction of the disulfide bridges results in the complete inactivation of the enzyme.

It localises to the secreted. It carries out the reaction cutin + H2O = cutin monomers.. In terms of biological role, catalyzes the hydrolysis of complex carboxylic polyesters found in the cell wall of plants. Degrades cutin, a macromolecule that forms the structure of the plant cuticle. Required for efficient penetration of the host plant cuticle by the appressorium during the initial stage of fungal infection. The sequence is that of Cutinase CUT1 from Pyricularia oryzae (strain 70-15 / ATCC MYA-4617 / FGSC 8958) (Rice blast fungus).